A 129-amino-acid polypeptide reads, in one-letter code: Large ribosomal subunit protein uL22 (129 aa).

This sequence belongs to the universal ribosomal protein uL22 family. As to quaternary structure, part of the 50S ribosomal subunit.

Its function is as follows. This protein binds specifically to 23S rRNA; its binding is stimulated by other ribosomal proteins, e.g. L4, L17, and L20. It is important during the early stages of 50S assembly. It makes multiple contacts with different domains of the 23S rRNA in the assembled 50S subunit and ribosome. In terms of biological role, the globular domain of the protein is located near the polypeptide exit tunnel on the outside of the subunit, while an extended beta-hairpin is found that lines the wall of the exit tunnel in the center of the 70S ribosome. In Brucella suis biovar 1 (strain 1330), this protein is Large ribosomal subunit protein uL22.